The sequence spans 170 residues: Small ribosomal subunit protein uS3mA (170 aa).

A mitochondrion-targeting transit peptide spans 1–30 (MAAPVMSALGRLQGLIRTERSLLTHVQSRC).

It belongs to the universal ribosomal protein uS3 family. As to quaternary structure, component of the mitochondrial ribosome small subunit (28S) which comprises a 12S rRNA and about 30 distinct proteins.

The protein localises to the mitochondrion. The protein is Small ribosomal subunit protein uS3mA (mrps24-a) of Xenopus laevis (African clawed frog).